The sequence spans 807 residues: Glycerol-3-phosphate acyltransferase (807 aa).

Residues 308 to 313 (CHRSHM) carry the HXXXXD motif motif.

This sequence belongs to the GPAT/DAPAT family.

It localises to the cell inner membrane. It catalyses the reaction sn-glycerol 3-phosphate + an acyl-CoA = a 1-acyl-sn-glycero-3-phosphate + CoA. Its pathway is phospholipid metabolism; CDP-diacylglycerol biosynthesis; CDP-diacylglycerol from sn-glycerol 3-phosphate: step 1/3. The chain is Glycerol-3-phosphate acyltransferase from Shewanella sp. (strain MR-7).